We begin with the raw amino-acid sequence, 484 residues long: MPGTPVSDLSAAAAVDAPALLPLPVARPSAPAVVRGKLYIKTHGCQMNEYDSAKMADVLAASEGLELTDNPEEADVVLVNTCSIREKAQEKVFSQLGRWKALKAGGKPVIIGVGGCVASQEGEAIVKRAPYVDLVFGPQTLHRLPELIRARRESGKSQVDISFPEIEKFDRLPEPRAEGPSAFVSIMEGCSKYCSFCVVPYTRGEEVSRPFEDVLVEVAQLAAQGVREINLLGQNVNAYRGAYGADAGDAAQYADLGLLIRTIAQIEGIGRIRFTTSHPLEFSDSLVDAYRDVPQLANYLHLPVQAGSDRILSAMKRGYTALEFKSKIRKLRAVRPDISISSDFIVGFPGETEADFEKTMKLIEDVGFDQSFSFVYSRRPGTPASDLQDDTPEAVKQARLARLQAHINAHAASISQSMVGSVQRVLVEGPSRRDPNELTGKSENMRPVNFPGNPRLIGQFVDVLITEAMSNSLRGRIQLDDSAQ.

The 118-residue stretch at 36–153 folds into the MTTase N-terminal domain; sequence GKLYIKTHGC…LPELIRARRE (118 aa). [4Fe-4S] cluster contacts are provided by Cys-45, Cys-82, Cys-116, Cys-190, Cys-194, and Cys-197. The Radical SAM core domain occupies 176–415; the sequence is RAEGPSAFVS…HINAHAASIS (240 aa). One can recognise a TRAM domain in the interval 416–479; the sequence is QSMVGSVQRV…SNSLRGRIQL (64 aa). Residues 428 to 450 form a disordered region; that stretch reads EGPSRRDPNELTGKSENMRPVNF.

The protein belongs to the methylthiotransferase family. MiaB subfamily. Monomer. [4Fe-4S] cluster is required as a cofactor.

It localises to the cytoplasm. It catalyses the reaction N(6)-dimethylallyladenosine(37) in tRNA + (sulfur carrier)-SH + AH2 + 2 S-adenosyl-L-methionine = 2-methylsulfanyl-N(6)-dimethylallyladenosine(37) in tRNA + (sulfur carrier)-H + 5'-deoxyadenosine + L-methionine + A + S-adenosyl-L-homocysteine + 2 H(+). Functionally, catalyzes the methylthiolation of N6-(dimethylallyl)adenosine (i(6)A), leading to the formation of 2-methylthio-N6-(dimethylallyl)adenosine (ms(2)i(6)A) at position 37 in tRNAs that read codons beginning with uridine. This is tRNA-2-methylthio-N(6)-dimethylallyladenosine synthase from Xanthomonas euvesicatoria pv. vesicatoria (strain 85-10) (Xanthomonas campestris pv. vesicatoria).